The chain runs to 138 residues: Small ribosomal subunit protein uS11c (138 aa).

It belongs to the universal ribosomal protein uS11 family. In terms of assembly, part of the 30S ribosomal subunit.

The protein resides in the plastid. It is found in the chloroplast. This chain is Small ribosomal subunit protein uS11c, found in Morus indica (Mulberry).